Here is a 280-residue protein sequence, read N- to C-terminus: Large ribosomal subunit protein uL2 (280 aa).

Disordered regions lie at residues 33–55 (LTEG…RRRG) and 199–266 (DNSN…KASQ). Positions 209 to 219 (GRMRHKGKRPS) are enriched in basic residues.

This sequence belongs to the universal ribosomal protein uL2 family. Part of the 50S ribosomal subunit. Forms a bridge to the 30S subunit in the 70S ribosome.

One of the primary rRNA binding proteins. Required for association of the 30S and 50S subunits to form the 70S ribosome, for tRNA binding and peptide bond formation. It has been suggested to have peptidyltransferase activity; this is somewhat controversial. Makes several contacts with the 16S rRNA in the 70S ribosome. In Ruegeria sp. (strain TM1040) (Silicibacter sp.), this protein is Large ribosomal subunit protein uL2.